The following is a 315-amino-acid chain: Cell division protein FtsZ (315 aa).

Residues Gly55–Gly57, Glu98, Arg102, and Asp146 contribute to the GTP site.

It belongs to the FtsZ family. As to quaternary structure, homodimer. Polymerizes to form a dynamic ring structure in a strictly GTP-dependent manner. Interacts directly with several other division proteins.

It localises to the cytoplasm. In terms of biological role, essential cell division protein that forms a contractile ring structure (Z ring) at the future cell division site. The regulation of the ring assembly controls the timing and the location of cell division. One of the functions of the FtsZ ring is to recruit other cell division proteins to the septum to produce a new cell wall between the dividing cells. Binds GTP and shows GTPase activity. This chain is Cell division protein FtsZ, found in Wolbachia pipientis.